The primary structure comprises 432 residues: Asparagine--tRNA ligase (432 aa).

It belongs to the class-II aminoacyl-tRNA synthetase family. As to quaternary structure, homodimer.

It localises to the cytoplasm. It carries out the reaction tRNA(Asn) + L-asparagine + ATP = L-asparaginyl-tRNA(Asn) + AMP + diphosphate + H(+). The protein is Asparagine--tRNA ligase of Lactobacillus delbrueckii subsp. bulgaricus (strain ATCC 11842 / DSM 20081 / BCRC 10696 / JCM 1002 / NBRC 13953 / NCIMB 11778 / NCTC 12712 / WDCM 00102 / Lb 14).